We begin with the raw amino-acid sequence, 136 residues long: ATP synthase epsilon chain (136 aa).

This sequence belongs to the ATPase epsilon chain family. In terms of assembly, F-type ATPases have 2 components, CF(1) - the catalytic core - and CF(0) - the membrane proton channel. CF(1) has five subunits: alpha(3), beta(3), gamma(1), delta(1), epsilon(1). CF(0) has three main subunits: a, b and c.

It localises to the cell membrane. Its function is as follows. Produces ATP from ADP in the presence of a proton gradient across the membrane. The sequence is that of ATP synthase epsilon chain from Macrococcus caseolyticus (strain JCSC5402) (Macrococcoides caseolyticum).